The sequence spans 143 residues: Calcitonin (143 aa).

An N-terminal signal peptide occupies residues methionine 1–alanine 25. The propeptide occupies threonine 26–alanine 84. Serine 42 carries the post-translational modification Phosphoserine. Positions threonine 62 to arginine 86 are disordered. A compositionally biased stretch (acidic residues) spans leucine 65 to serine 78. Cysteine 87 and cysteine 93 are disulfide-bonded. The interval glycine 112–asparagine 143 is disordered. Proline 118 bears the Proline amide mark. Basic and acidic residues predominate over residues proline 118–serine 133. A propeptide spanning residues arginine 122–asparagine 143 is cleaved from the precursor.

Belongs to the calcitonin family.

The protein localises to the secreted. Functionally, calcitonin is a peptide hormone that causes a rapid but short-lived drop in the level of calcium and phosphate in blood by promoting the incorporation of those ions in the bones. Calcitonin function is mediated by the calcitonin receptor/CALCR and the CALCR-RAMP2 (AMYR2) receptor complex. The chain is Calcitonin (CALCA) from Ovis aries (Sheep).